The chain runs to 257 residues: Histidine/lysine/arginine/ornithine transport ATP-binding protein HisP (257 aa).

The ABC transporter domain occupies 6–252 (LNVIDLHKRY…PQSPRLQRFL (247 aa)). ATP contacts are provided by Ser40, Gly41, Gly43, Lys44, Ser45, and Thr46.

It belongs to the ABC transporter superfamily. The HisPMQJ complex is composed of two ATP-binding proteins (HisP), two transmembrane proteins (HisM and HisQ) and a solute-binding protein (HisJ). The HisPMQ-ArgT complex is composed of two ATP-binding proteins (HisP), two transmembrane proteins (HisM and HisQ) and a solute-binding protein (ArgT).

It localises to the cell inner membrane. It carries out the reaction a polar amino acid(out) + ATP + H2O = a polar amino acid(in) + ADP + phosphate + H(+). The enzyme catalyses L-histidine(out) + ATP + H2O = L-histidine(in) + ADP + phosphate + H(+). The catalysed reaction is L-lysine(out) + ATP + H2O = L-lysine(in) + ADP + phosphate + H(+). It catalyses the reaction L-arginine(out) + ATP + H2O = L-arginine(in) + ADP + phosphate + H(+). It carries out the reaction L-ornithine(out) + ATP + H2O = L-ornithine(in) + ADP + phosphate + H(+). Its function is as follows. Part of the ABC transporter complex HisPMQJ involved in histidine transport. Is also part of the ABC transporter complex HisPMQ-ArgT involved in lysine/arginine/ornithine transport. Shows ATPase activity. Responsible for energy coupling to the transport system. The polypeptide is Histidine/lysine/arginine/ornithine transport ATP-binding protein HisP (Escherichia coli (strain K12)).